Consider the following 128-residue polypeptide: Small ribosomal subunit protein eS8 (128 aa).

A disordered region spans residues 1-37 (MGYFQGNDFRKITGGKKGKHRDKRKFELGSPPTETKL). Over residues 13–23 (TGGKKGKHRDK) the composition is skewed to basic residues.

Belongs to the eukaryotic ribosomal protein eS8 family. Part of the 30S ribosomal subunit.

This chain is Small ribosomal subunit protein eS8, found in Sulfurisphaera tokodaii (strain DSM 16993 / JCM 10545 / NBRC 100140 / 7) (Sulfolobus tokodaii).